The sequence spans 452 residues: MFKSIMYALAVAPAVTSSSDKLPNGVVSASQLGSEKEKRKLKNVTKIVIVGGGAGGLSVASQLEHKFKNKGDIVIVEPSEKHYYQPLWTLVGGGIFSRKDSEKDEKDFIPKGATWVKDSVTVFKPEENIVLTKDGKEIDYDYLVVSTGLELYWDRVKGLKENLGKNGVTSNYSYDSCEKTFEFIKSLKPGNVAIFTVPTTGVKCGGAPQKILWLCDDYLRKHGIRDKVRLDFNSAGASMFPVKKYSEVLDKMAKERGVNQNFAHNLVEIKGDSKEAVFETPQGNKTVKYDMIHVVPPMGPHSVIKNSPLADPATGFVNVDKGTLQHVKYDNVFSLGDTSNLPTSKTAAAITSQAPILVGNLINHKLGLPLNHKYDGYTSCPITTSYSKIILAEFKYGFEVDESLPFDQSKESYFPMFLKKYVFPTAYWEGMLKGRWFGKNTLFNPIKTPEIN.

FAD-binding positions include Ala54–Gly55, Glu77, Gln85, and Val120. Cys204 (cysteine persulfide intermediate) is an active-site residue. A disulfide bridge connects residues Cys204 and Cys380. FAD contacts are provided by residues Asp337 and Lys345–Ala348. Cys380 acts as the Cysteine persulfide intermediate in catalysis.

This sequence belongs to the SQRD family. It depends on FAD as a cofactor.

The protein resides in the mitochondrion. The enzyme catalyses ubiquinone-10 + hydrogen sulfide + sulfite + 2 H(+) = ubiquinol-10 + thiosulfate. The catalysed reaction is a quinone + hydrogen sulfide + glutathione + H(+) = S-sulfanylglutathione + a quinol. In terms of biological role, catalyzes the oxidation of hydrogen sulfide, with the help of a quinone. This Dictyostelium discoideum (Social amoeba) protein is Sulfide:quinone oxidoreductase, mitochondrial.